The primary structure comprises 396 residues: uncharacterized protein (396 aa).

12 helical membrane-spanning segments follow: residues 8–28 (TASG…ILAS), 44–64 (ISYV…ISGV), 73–93 (PLVV…PLSP), 97–117 (LAFV…AGTY), 133–153 (VLVK…ITFL), 158–178 (MFYG…IIYL), 213–233 (ALII…IWLP), 250–270 (LLSY…VLLN), 276–296 (VFIT…MLTV), 304–324 (ITAF…ITLM), 338–358 (IVAT…GLIA), and 363–383 (IAHI…AAAF).

It belongs to the major facilitator superfamily.

Its subcellular location is the cell membrane. This is an uncharacterized protein from Bacillus subtilis (strain 168).